The primary structure comprises 620 residues: 1-deoxy-D-xylulose-5-phosphate synthase (620 aa).

Residues histidine 80 and 121 to 123 contribute to the thiamine diphosphate site; that span reads GHS. Aspartate 152 serves as a coordination point for Mg(2+). Thiamine diphosphate contacts are provided by residues 153 to 154, asparagine 181, tyrosine 288, and glutamate 370; that span reads GA. Asparagine 181 contacts Mg(2+).

Belongs to the transketolase family. DXPS subfamily. As to quaternary structure, homodimer. It depends on Mg(2+) as a cofactor. The cofactor is thiamine diphosphate.

It carries out the reaction D-glyceraldehyde 3-phosphate + pyruvate + H(+) = 1-deoxy-D-xylulose 5-phosphate + CO2. It participates in metabolic intermediate biosynthesis; 1-deoxy-D-xylulose 5-phosphate biosynthesis; 1-deoxy-D-xylulose 5-phosphate from D-glyceraldehyde 3-phosphate and pyruvate: step 1/1. Its function is as follows. Catalyzes the acyloin condensation reaction between C atoms 2 and 3 of pyruvate and glyceraldehyde 3-phosphate to yield 1-deoxy-D-xylulose-5-phosphate (DXP). This is 1-deoxy-D-xylulose-5-phosphate synthase from Salmonella typhi.